A 767-amino-acid chain; its full sequence is Ribonucleoside-diphosphate reductase subunit alpha (767 aa).

The disordered stretch occupies residues 1-30 (MHPTLISAPISSSANDAHAGTSQGSHQGHR). Polar residues predominate over residues 9–26 (PISSSANDAHAGTSQGSH). Residues 31–120 (IQVIRRDGSS…VWSLWKDTLV (90 aa)) form the ATP-cone domain. Substrate contacts are provided by residues T228, 243-244 (SC), G272, 460-464 (NLCCE), and 631-635 (PNTSS). C244 and C478 form a disulfide bridge. N460 functions as the Proton acceptor in the catalytic mechanism. The Cysteine radical intermediate role is filled by C462. Residue E464 is the Proton acceptor of the active site.

Belongs to the ribonucleoside diphosphate reductase large chain family. As to quaternary structure, tetramer of two alpha and two beta subunits.

The catalysed reaction is a 2'-deoxyribonucleoside 5'-diphosphate + [thioredoxin]-disulfide + H2O = a ribonucleoside 5'-diphosphate + [thioredoxin]-dithiol. Its activity is regulated as follows. Under complex allosteric control mediated by deoxynucleoside triphosphates and ATP binding. The type of nucleotide bound at the specificity site determines substrate preference. It seems probable that ATP makes the enzyme reduce CDP and UDP, dGTP favors ADP reduction and dTTP favors GDP reduction. Functionally, provides the precursors necessary for DNA synthesis. Catalyzes the biosynthesis of deoxyribonucleotides from the corresponding ribonucleotides. The protein is Ribonucleoside-diphosphate reductase subunit alpha (nrdA) of Synechocystis sp. (strain ATCC 27184 / PCC 6803 / Kazusa).